We begin with the raw amino-acid sequence, 163 residues long: Phosphopantetheine adenylyltransferase (163 aa).

S8 contributes to the substrate binding site. ATP-binding positions include S8–F9 and H16. Substrate-binding residues include K40, T72, and R86. Residues G87 to R89, E97, and H122 to S128 each bind ATP.

The protein belongs to the bacterial CoaD family. In terms of assembly, homohexamer. The cofactor is Mg(2+).

Its subcellular location is the cytoplasm. The enzyme catalyses (R)-4'-phosphopantetheine + ATP + H(+) = 3'-dephospho-CoA + diphosphate. It functions in the pathway cofactor biosynthesis; coenzyme A biosynthesis; CoA from (R)-pantothenate: step 4/5. Its function is as follows. Reversibly transfers an adenylyl group from ATP to 4'-phosphopantetheine, yielding dephospho-CoA (dPCoA) and pyrophosphate. This is Phosphopantetheine adenylyltransferase from Parasynechococcus marenigrum (strain WH8102).